Here is a 138-residue protein sequence, read N- to C-terminus: Large ribosomal subunit protein bL17 (138 aa).

The interval 118-138 is disordered; the sequence is RDEDAKGKDSGPSQDGAAEAA.

It belongs to the bacterial ribosomal protein bL17 family. Part of the 50S ribosomal subunit. Contacts protein L32.

This Rhodopseudomonas palustris (strain HaA2) protein is Large ribosomal subunit protein bL17.